The following is a 1212-amino-acid chain: Nucleolar protein 6 (1212 aa).

Disordered stretches follow at residues 1–72 (MGKI…PVSI) and 1156–1212 (KREQ…KSLS). The segment covering 1197-1212 (LKRKSLIKSRPLKSLS) has biased composition (basic residues).

Belongs to the NRAP family. As to quaternary structure, part of the small subunit (SSU) processome, composed of more than 70 proteins and the RNA chaperone small nucleolar RNA (snoRNA) U3.

It localises to the nucleus. It is found in the nucleolus. The protein resides in the chromosome. In terms of biological role, part of the small subunit (SSU) processome, first precursor of the small eukaryotic ribosomal subunit. During the assembly of the SSU processome in the nucleolus, many ribosome biogenesis factors, an RNA chaperone and ribosomal proteins associate with the nascent pre-rRNA and work in concert to generate RNA folding, modifications, rearrangements and cleavage as well as targeted degradation of pre-ribosomal RNA by the RNA exosome. This chain is Nucleolar protein 6, found in Drosophila persimilis (Fruit fly).